The chain runs to 453 residues: Aspartate aminotransferase, chloroplastic (453 aa).

A chloroplast-targeting transit peptide spans 1-44 (MASLMLSLGSTSLLPREINKDKLKLGTSASNPFLKAKSFSRVTM). Positions 85, 181, and 234 each coordinate L-aspartate. Lysine 298 carries the N6-(pyridoxal phosphate)lysine modification. Residue arginine 427 coordinates L-aspartate.

This sequence belongs to the class-I pyridoxal-phosphate-dependent aminotransferase family. As to quaternary structure, homodimer. The cofactor is pyridoxal 5'-phosphate.

Its subcellular location is the plastid. It is found in the chloroplast. The protein localises to the amyloplast. The enzyme catalyses L-aspartate + 2-oxoglutarate = oxaloacetate + L-glutamate. Functionally, amino acid aminotransferase important for the metabolism of amino acids and Krebs-cycle related organic acids. No activity with D-Asp or D-Ala as amino donors. In plants, it is involved in nitrogen metabolism and in aspects of carbon and energy metabolism. In Arabidopsis thaliana (Mouse-ear cress), this protein is Aspartate aminotransferase, chloroplastic (ASP5).